Consider the following 187-residue polypeptide: Ribosome-recycling factor (187 aa).

Belongs to the RRF family.

Its subcellular location is the cytoplasm. Functionally, responsible for the release of ribosomes from messenger RNA at the termination of protein biosynthesis. May increase the efficiency of translation by recycling ribosomes from one round of translation to another. The chain is Ribosome-recycling factor from Methylobacterium nodulans (strain LMG 21967 / CNCM I-2342 / ORS 2060).